Reading from the N-terminus, the 318-residue chain is DNA repair nuclease/redox regulator APEX1 (318 aa).

Residues 1-33 are necessary for interaction with YBX1, binding to RNA, association together with NPM1 to rRNA, endoribonuclease activity on abasic RNA and localization in the nucleoli; sequence MPKRGKKGAVAEDGDELKTEPEAKKSKTAAKKN. A disordered region spans residues 1–60; that stretch reads MPKRGKKGAVAEDGDELKTEPEAKKSKTAAKKNDKEAAGEGPALYEDPPDQKTSPSGKPA. N6-acetyllysine; by EP300 occurs at positions 6 and 7. The short motif at 8–13 is the Nuclear localization signal (NLS) element; that stretch reads GAVAED. The segment covering 16–38 has biased composition (basic and acidic residues); sequence ELKTEPEAKKSKTAAKKNDKEAA. The segment at 23–33 is necessary for interaction with NPM1 and for efficient rRNA binding; that stretch reads AKKSKTAAKKN. Lys-27, Lys-31, Lys-32, and Lys-35 each carry N6-acetyllysine. Ser-54 carries the post-translational modification Phosphoserine. A Nuclear export signal (NES) motif is present at residues 64 to 80; the sequence is ICSWNVDGLRAWIKKKG. The residue at position 65 (Cys-65) is an S-nitrosocysteine; alternate. An intrachain disulfide couples Cys-65 to Cys-93. Asp-70 is a Mg(2+) binding site. Position 93 is an S-nitrosocysteine; alternate (Cys-93). Glu-96 contributes to the Mg(2+) binding site. Residue Tyr-171 is part of the active site. Position 197 is an N6-acetyllysine (Lys-197). 2 residues coordinate Mg(2+): Asp-210 and Asn-212. Asp-210 (proton donor/acceptor) is an active-site residue. A Phosphothreonine; by CDK5 modification is found at Thr-233. The interval 289–318 is mitochondrial targeting sequence (MTS); that stretch reads HSLLPALCDSKIRSKALGSDHCPITLYLAL. A Mg(2+)-binding site is contributed by Asp-308. Position 310 is an S-nitrosocysteine (Cys-310).

The protein belongs to the DNA repair enzymes AP/ExoA family. Monomer. Homodimer; disulfide-linked. Component of the SET complex, composed of at least APEX1, SET, ANP32A, HMGB2, NME1 and TREX1. Associates with the dimer XRCC5/XRCC6 in a DNA-dependent manner. Interacts with SIRT1; the interaction is increased in the context of genotoxic stress. Interacts with HDAC1, HDAC2 and HDAC3; the interactions are not dependent on the APEX1 acetylation status. Interacts with XRCC1; the interaction is induced by SIRT1 and increased with the APEX1 acetylated form. Interacts with NPM1 (via N-terminal domain); the interaction is RNA-dependent and decreases in hydrogen peroxide-damaged cells. Interacts (via N-terminus) with YBX1 (via C-terminus); the interaction is increased in presence of APEX1 acetylated at Lys-6 and Lys-7. Interacts with HNRNPL; the interaction is DNA-dependent. Interacts (via N-terminus) with KPNA1 and KPNA2. Interacts with TXN; the interaction stimulates the FOS/JUN AP-1 complex DNA-binding activity in a redox-dependent manner. Interacts with GZMA, KRT8, MDM2, POLB, PRDX6, PRPF19, RPLP0, TOMM20 and WDR77. Binds to CDK5. It depends on Mg(2+) as a cofactor. Mn(2+) serves as cofactor. Post-translationally, phosphorylated. Phosphorylation by kinase PKC or casein kinase CK2 results in enhanced redox activity that stimulates binding of the FOS/JUN AP-1 complex to its cognate binding site. AP-endodeoxyribonuclease activity is not affected by CK2-mediated phosphorylation. Phosphorylation of Thr-233 by CDK5 in response to MPP(+)/MPTP (1-methyl-4-phenylpyridinium) reduces AP-endodeoxyribonuclease activity resulting in accumulation of DNA damage and contributing to neuronal death. In terms of processing, acetylated on Lys-6 and Lys-7. Acetylation is increased by the transcriptional coactivator EP300 acetyltransferase, genotoxic agents like H(2)O(2) and methyl methanesulfonate (MMS). Acetylation increases its binding affinity to the negative calcium response element (nCaRE) DNA promoter. The acetylated form induces a stronger binding of YBX1 to the Y-box sequence in the MDR1 promoter than the unacetylated form. Deacetylated on lysines. Lys-6 and Lys-7 are deacetylated by SIRT1. Cleaved at Lys-31 by granzyme A to create the mitochondrial form; leading in reduction of binding to DNA, AP endodeoxyribonuclease activity, redox activation of transcription factors and to enhanced cell death. Cleaved by granzyme K; leading to intracellular ROS accumulation and enhanced cell death after oxidative stress. Post-translationally, cys-69 and Cys-93 are nitrosylated in response to nitric oxide (NO) and lead to the exposure of the nuclear export signal (NES). In terms of processing, ubiquitinated by MDM2; leading to translocation to the cytoplasm and proteasomal degradation.

The protein localises to the nucleus. Its subcellular location is the nucleolus. It localises to the nucleus speckle. The protein resides in the endoplasmic reticulum. It is found in the cytoplasm. The protein localises to the mitochondrion. The catalysed reaction is Exonucleolytic cleavage in the 3'- to 5'-direction to yield nucleoside 5'-phosphates.. Its activity is regulated as follows. NPM1 stimulates endodeoxyribonuclease activity on double-stranded DNA with AP sites, but inhibits endoribonuclease activity on single-stranded RNA containing AP sites. Its function is as follows. Multifunctional protein that plays a central role in the cellular response to oxidative stress. The two major activities of APEX1 are DNA repair and redox regulation of transcriptional factors. Functions as an apurinic/apyrimidinic (AP) endodeoxyribonuclease in the DNA base excision repair (BER) pathway of DNA lesions induced by oxidative and alkylating agents. Initiates repair of AP sites in DNA by catalyzing hydrolytic incision of the phosphodiester backbone immediately adjacent to the damage, generating a single-strand break with 5'-deoxyribose phosphate and 3'-hydroxyl ends. Also incises at AP sites in the DNA strand of DNA/RNA hybrids, single-stranded DNA regions of R-loop structures, and single-stranded RNA molecules. Has 3'-5' exoribonuclease activity on mismatched deoxyribonucleotides at the 3' termini of nicked or gapped DNA molecules during short-patch BER. Possesses DNA 3' phosphodiesterase activity capable of removing lesions (such as phosphoglycolate) blocking the 3' side of DNA strand breaks. May also play a role in the epigenetic regulation of gene expression by participating in DNA demethylation. Acts as a loading factor for POLB onto non-incised AP sites in DNA and stimulates the 5'-terminal deoxyribose 5'-phosphate (dRp) excision activity of POLB. Plays a role in the protection from granzyme-mediated cellular repair leading to cell death. Also involved in the DNA cleavage step of class switch recombination (CSR). On the other hand, APEX1 also exerts reversible nuclear redox activity to regulate DNA binding affinity and transcriptional activity of transcriptional factors by controlling the redox status of their DNA-binding domain, such as the FOS/JUN AP-1 complex after exposure to IR. Involved in calcium-dependent down-regulation of parathyroid hormone (PTH) expression by binding to negative calcium response elements (nCaREs). Together with HNRNPL or the dimer XRCC5/XRCC6, associates with nCaRE, acting as an activator of transcriptional repression. Stimulates the YBX1-mediated MDR1 promoter activity, when acetylated at Lys-6 and Lys-7, leading to drug resistance. Also acts as an endoribonuclease involved in the control of single-stranded RNA metabolism. Plays a role in regulating MYC mRNA turnover by preferentially cleaving in between UA and CA dinucleotides of the MYC coding region determinant (CRD). In association with NMD1, plays a role in the rRNA quality control process during cell cycle progression. Associates, together with YBX1, on the MDR1 promoter. Together with NPM1, associates with rRNA. Binds DNA and RNA. The chain is DNA repair nuclease/redox regulator APEX1 (APEX1) from Gorilla gorilla gorilla (Western lowland gorilla).